Here is a 93-residue protein sequence, read N- to C-terminus: Small ribosomal subunit protein uS19 (93 aa).

A disordered region spans residues 74–93 (FSPTRTFRGHVKDDRKSKRR). The segment covering 83-93 (HVKDDRKSKRR) has biased composition (basic and acidic residues).

The protein belongs to the universal ribosomal protein uS19 family.

In terms of biological role, protein S19 forms a complex with S13 that binds strongly to the 16S ribosomal RNA. The chain is Small ribosomal subunit protein uS19 from Streptomyces griseus subsp. griseus (strain JCM 4626 / CBS 651.72 / NBRC 13350 / KCC S-0626 / ISP 5235).